Consider the following 1678-residue polypeptide: Hispidin synthase (1678 aa).

Residues 33 to 453 (GEHRWSYREL…WLGRNTDFIQ (421 aa)) are adenylation (A) domain. In terms of domain architecture, Carrier 1 spans 586–661 (DELSNTVKHI…SLSNAVYAKL (76 aa)). S620 carries the post-translational modification O-(pantetheine 4'-phosphoryl)serine. The 426-residue stretch at 683–1108 (GKEIVVVGQA…GTLGGIVLEA (426 aa)) folds into the Ketosynthase family 3 (KS3) domain. Residues C852, H988, and H1029 each act as for beta-ketoacyl synthase activity in the active site. Residues 1201–1499 (YKRGALAFAF…VAWSLLLSNG (299 aa)) are malonyl-CoA:ACP transacylase (MAT) domain. Residues 1562–1582 (EETLSSGSSTPTLENTDLDSG) are disordered. Polar residues predominate over residues 1564-1576 (TLSSGSSTPTLEN). A Carrier 2 domain is found at 1597–1672 (DDLRDSIVSS…EMVSNLVEQA (76 aa)). At S1632 the chain carries O-(pantetheine 4'-phosphoryl)serine.

The protein in the N-terminal section; belongs to the NRP synthetase family.

It catalyses the reaction (E)-caffeate + 2 malonyl-CoA + ATP + H(+) = hispidin + AMP + 2 CO2 + diphosphate + 2 CoA. Its pathway is secondary metabolite biosynthesis. Functionally, PKS-NRPS hybrid synthetase; part of the gene cluster that mediates the fungal bioluminescence cycle. Performs the biosynthesis of hispidin from caffeic acid by two cycles of addition of malonyl units followed by lactonization. The fungal bioluminescence cycle begins with the hispidin synthetase that catalyzes the formation of hispidin which is further hydroxylated by the hispidin-3-hydroxylase, yielding the fungal luciferin 3-hydroxyhispidin. The luciferase then produces an endoperoxide as a high-energy intermediate with decomposition that yields oxyluciferin (also known as caffeoylpyruvate) and light emission. Oxyluciferin can be recycled to caffeic acid by caffeoylpyruvate hydrolase. This is Hispidin synthase from Neonothopanus nambi (Agaricus nambi).